A 132-amino-acid polypeptide reads, in one-letter code: U11/U12 small nuclear ribonucleoprotein 25 kDa protein (132 aa).

In terms of domain architecture, Ubiquitin-like spans 41 to 132 (MTVRVCKMDG…VSFIKKLRQK (92 aa)).

Component of the U11/U12 snRNPs that are part of the U12-type spliceosome.

It is found in the nucleus. The polypeptide is U11/U12 small nuclear ribonucleoprotein 25 kDa protein (SNRNP25) (Homo sapiens (Human)).